The following is a 116-amino-acid chain: NADH-quinone oxidoreductase subunit A (116 aa).

The next 3 helical transmembrane spans lie at 3-23, 61-81, and 85-105; these read FTLL…ALGI, FAIL…WAVV, and LGVY…LGLA.

Belongs to the complex I subunit 3 family. As to quaternary structure, NDH-1 is composed of 14 different subunits. Subunits NuoA, H, J, K, L, M, N constitute the membrane sector of the complex.

Its subcellular location is the cell inner membrane. The enzyme catalyses a quinone + NADH + 5 H(+)(in) = a quinol + NAD(+) + 4 H(+)(out). Its function is as follows. NDH-1 shuttles electrons from NADH, via FMN and iron-sulfur (Fe-S) centers, to quinones in the respiratory chain. The immediate electron acceptor for the enzyme in this species is believed to be a menaquinone. Couples the redox reaction to proton translocation (for every two electrons transferred, four hydrogen ions are translocated across the cytoplasmic membrane), and thus conserves the redox energy in a proton gradient. This is NADH-quinone oxidoreductase subunit A from Phocaeicola vulgatus (strain ATCC 8482 / DSM 1447 / JCM 5826 / CCUG 4940 / NBRC 14291 / NCTC 11154) (Bacteroides vulgatus).